The following is a 1187-amino-acid chain: ATP-dependent DNA helicase MPH1 (1187 aa).

The region spanning 144 to 311 is the Helicase ATP-binding domain; the sequence is IVERAFYDNL…QIIDNLNISK (168 aa). 157 to 164 serves as a coordination point for ATP; the sequence is LPTGLGKT. The DEAH box motif lies at 259–262; sequence DEAH. The region spanning 486–681 is the Helicase C-terminal domain; the sequence is ELDDFFKNHE…FIQLRPQHRM (196 aa). 3 disordered regions span residues 542–576, 781–848, and 941–1003; these read VENF…MTGM, DKLV…NNQV, and PEKP…LGVK. A compositionally biased stretch (basic residues) spans 547–556; that stretch reads KKKQKGQTKK. Polar residues predominate over residues 564–576; it reads TRSSSENAQMTGM. Over residues 781 to 817 the composition is skewed to basic and acidic residues; the sequence is DKLVDSDSESEVDKENENVIQEVDKSKNQEQNDHIIT. Residues 822–848 show a composition bias toward polar residues; the sequence is TEQSVAGNTKSTTNGTSYSEPENNNQV. A compositionally biased stretch (low complexity) spans 967 to 977; sequence SNSISIPSSTT. The segment covering 980-989 has biased composition (basic and acidic residues); the sequence is SHNEVTRKVV.

This sequence belongs to the DEAD box helicase family. DEAH subfamily. FANCM sub-subfamily. In terms of assembly, interacts with the MHF histone-fold complex to form the FANCM-MHF complex.

It localises to the nucleus. The catalysed reaction is ATP + H2O = ADP + phosphate + H(+). Its function is as follows. ATP-dependent DNA helicase involved in DNA damage repair by homologous recombination and in genome maintenance. Capable of unwinding D-loops. Plays a role in limiting crossover recombinants during mitotic DNA double-strand break (DSB) repair. Component of a FANCM-MHF complex which promotes gene conversion at blocked replication forks, probably by reversal of the stalled fork. The sequence is that of ATP-dependent DNA helicase MPH1 from Candida albicans (strain SC5314 / ATCC MYA-2876) (Yeast).